The following is a 150-amino-acid chain: Monooxygenase dmxR10 (150 aa).

The protein belongs to the avfA family.

It functions in the pathway secondary metabolite biosynthesis. In terms of biological role, monooxygenase; part of the gene cluster that mediates the biosynthesis of the dimeric xanthones cryptosporioptides. The pathway begins with the synthesis of atrochrysone thioester by the polyketide synthase dmx-nrPKS. The atrochrysone carboxyl ACP thioesterase dmxR1 then breaks the thioester bond and releases the atrochrysone carboxylic acid from dmx-nrPKS. Atrochrysone carboxylic acid is decarboxylated by the decarboxylase dmxR15, and oxidized by the anthrone oxygenase dmxR16 to yield emodin. Emodin is then reduced to emodin hydroquinone by the oxidoreductase dmxR7. A-ring reduction by the short chain dehydrogenase dmxR18, dehydration by the scytalone dehydratase-like protein dmxR17 and probable spontaneous re-oxidation, results in overall deoxygenation to chrysophanol. Baeyer-Villiger oxidation by the Baeyer-Villiger monooxygenase (BVMO) dmxR6 then yields monodictylactone in equilibrium with monodictyphenone. In the case of the cryptosporioptides biosynthesis, monodictylactone is reduced at C-12 to an alcohol (by the short chain dehydrogenases dmxR12 or dmxR8) and hydroxylated at C-5 by dmxR9, yielding the electron-rich aromatic which could eliminate H(2)O to form the ortho-quinonemethide, followed by tautomerisation to paraquinone and complete the formal reduction to produce the 10-methylgroup. Conjugate addition of C-4a-OH to the resulting paraquinone by the monooxygenase dmxR10 then gives cyclohexadienone, which is then reduced at C-5 by the short chain dehydrogenase dmxR3 to give the dihydroxanthone. The 6,7-epoxide in the cryptosporioptides could be introduced by the cytochrome P450 monooxygenase dmxL3. The highly reducing PKS dmxL2 manufactures butyrate, which is further carboxylated by dmxL1 to form ethylmalonate. It is not yet clear whether the carboxylation occurs while the butyrate is attached to the ACP of dmxL2, but this unusual fungal metabolite could then be esterified to O-5 by the O-acetyltransferase dmxR13. Finally, dimerization performed by dmxR5 gives the observed dimers cryptosporioptides A, B and C as the final products of the pathway. The protein is Monooxygenase dmxR10 of Cryptosporiopsis sp. (strain 8999).